Consider the following 87-residue polypeptide: Small ribosomal subunit protein uS17 (87 aa).

It belongs to the universal ribosomal protein uS17 family. As to quaternary structure, part of the 30S ribosomal subunit.

Functionally, one of the primary rRNA binding proteins, it binds specifically to the 5'-end of 16S ribosomal RNA. This is Small ribosomal subunit protein uS17 from Staphylococcus haemolyticus (strain JCSC1435).